Here is a 198-residue protein sequence, read N- to C-terminus: UPF0301 protein BDI_1431 (198 aa).

This sequence belongs to the UPF0301 (AlgH) family.

This is UPF0301 protein BDI_1431 from Parabacteroides distasonis (strain ATCC 8503 / DSM 20701 / CIP 104284 / JCM 5825 / NCTC 11152).